The primary structure comprises 97 residues: Co-chaperonin GroES (97 aa).

The protein belongs to the GroES chaperonin family. In terms of assembly, heptamer of 7 subunits arranged in a ring. Interacts with the chaperonin GroEL.

The protein localises to the cytoplasm. Its function is as follows. Together with the chaperonin GroEL, plays an essential role in assisting protein folding. The GroEL-GroES system forms a nano-cage that allows encapsulation of the non-native substrate proteins and provides a physical environment optimized to promote and accelerate protein folding. GroES binds to the apical surface of the GroEL ring, thereby capping the opening of the GroEL channel. The chain is Co-chaperonin GroES from Yersinia enterocolitica serotype O:8 / biotype 1B (strain NCTC 13174 / 8081).